Here is a 701-residue protein sequence, read N- to C-terminus: Glycine--tRNA ligase beta subunit (701 aa).

The protein belongs to the class-II aminoacyl-tRNA synthetase family. As to quaternary structure, tetramer of two alpha and two beta subunits.

It is found in the cytoplasm. It catalyses the reaction tRNA(Gly) + glycine + ATP = glycyl-tRNA(Gly) + AMP + diphosphate. The sequence is that of Glycine--tRNA ligase beta subunit from Nitratidesulfovibrio vulgaris (strain DSM 19637 / Miyazaki F) (Desulfovibrio vulgaris).